Consider the following 436-residue polypeptide: UDP-N-acetylmuramate--L-alanine ligase (436 aa).

ATP is bound at residue 110 to 116 (GAHGKTS).

Belongs to the MurCDEF family.

The protein resides in the cytoplasm. It catalyses the reaction UDP-N-acetyl-alpha-D-muramate + L-alanine + ATP = UDP-N-acetyl-alpha-D-muramoyl-L-alanine + ADP + phosphate + H(+). It functions in the pathway cell wall biogenesis; peptidoglycan biosynthesis. Its function is as follows. Cell wall formation. This Lacticaseibacillus casei (strain BL23) (Lactobacillus casei) protein is UDP-N-acetylmuramate--L-alanine ligase.